The chain runs to 185 residues: Tetrahydromethanopterin S-methyltransferase subunit A 2 (185 aa).

The Cytoplasmic portion of the chain corresponds to 1–21; sequence MVDKKVDKKPVPEDWPHIVGD. Residues 22–38 form a helical membrane-spanning segment; sequence YVVGDAESPVAVVTLGS. Over 39–185 the chain is Extracellular; it reads HMEDEPVRAG…LNKNKPDENT (147 aa). H88 is a binding site for 5-hydroxybenzimidazolylcob(I)amide.

It belongs to the MtrA family. As to quaternary structure, the complex is composed of 8 subunits; MtrA, MtrB, MtrC, MtrD, MtrE, MtrF, MtrG and MtrH. 5-hydroxybenzimidazolylcob(I)amide serves as cofactor.

It localises to the cell membrane. It carries out the reaction 5-methyl-5,6,7,8-tetrahydromethanopterin + coenzyme M + 2 Na(+)(in) = 5,6,7,8-tetrahydromethanopterin + methyl-coenzyme M + 2 Na(+)(out). The protein operates within one-carbon metabolism; methanogenesis from CO(2); methyl-coenzyme M from 5,10-methylene-5,6,7,8-tetrahydromethanopterin: step 2/2. Part of a complex that catalyzes the formation of methyl-coenzyme M and tetrahydromethanopterin from coenzyme M and methyl-tetrahydromethanopterin. This is an energy-conserving, sodium-ion translocating step. The polypeptide is Tetrahydromethanopterin S-methyltransferase subunit A 2 (Methanothermobacter marburgensis (strain ATCC BAA-927 / DSM 2133 / JCM 14651 / NBRC 100331 / OCM 82 / Marburg) (Methanobacterium thermoautotrophicum)).